Reading from the N-terminus, the 90-residue chain is Large ribosomal subunit protein bL27 (90 aa).

The disordered stretch occupies residues 1 to 21 (MAHTKAGGTTRNSRDSAGRRL).

The protein belongs to the bacterial ribosomal protein bL27 family.

In Metamycoplasma arthritidis (strain 158L3-1) (Mycoplasma arthritidis), this protein is Large ribosomal subunit protein bL27.